The chain runs to 199 residues: Protein ASYMMETRIC LEAVES 2 (199 aa).

Residues 8–109 (SPCAACKFLR…IDLSCAKSEL (102 aa)) enclose the LOB domain.

Belongs to the LOB domain-containing protein family. In terms of assembly, homo- and heterodimer with AS1. Interacts with AS1. Part of the AS1 repressor complex composed of AS1, LBD6/AS2 and HDA6. Interacts with LFR. In terms of tissue distribution, expressed in young shoots, roots, stems, leaves, flowers and adaxial domains of cotyledonary and leaves primordia.

The protein resides in the nucleus. In terms of biological role, negative regulator of cell proliferation in the adaxial side of leaves. Regulates the formation of a symmetric lamina and the establishment of venation. Positively regulates LATERAL ORGAN BOUNDARIES (LOB) within the shoot apex, and the class III HD-ZIP genes REV, PHB, and PHV. Interacts directly with ASYMMETRIC LEAVES 1 (AS1) to repress the knox homeobox genes KNAT1, KNAT2, and KNAT6 and the abaxial determinants ARF3, KAN2 and YAB5. May act in parallel with the RDR6-SGS3-AGO7 pathway, an endogenous RNA silencing pathway, to regulate the leaf morphogenesis. Required for the binding of AS1 to the KNOX genes. Involved in leaf polarity establishment by functioning cooperatively with RH10 or RID2 to repress abaxial genes ARF3, ARF4, KAN1, KAN2, YAB1 and YAB5, and the knox homeobox genes KNAT1, KNAT2, KNAT6, and STM to promote adaxial development in leaf primordia at shoot apical meristems at high temperatures. This Arabidopsis thaliana (Mouse-ear cress) protein is Protein ASYMMETRIC LEAVES 2.